The chain runs to 498 residues: MTALFPFDNSFARLPDRFFARVAPTAVEAPRLVRLNRTLALDLGLDPDRLESPEGLDVLSGRRVAEGAEPLAAAYAGHQFGQFVPQLGDGRAILLGEVVGRDGRRRDIQLKGSGPTPFSRRGDGRAALGPVLREYLVSEAMHALGIPTTRALAAVTTGEPVIRETVLPGAVLTRVASSHIRVGSFQFFAARGDVEGLRALADHAIARHDPEAAEAENPYRALLEGVIRRQAELVARWLGIGFIHGVMNTDNMSIAGETIDYGPCAFLDAYDPATAFSSIDRHGRYAYGNQPRIALWNLTRLAEALLPLLSEDETKAVAEAEAALTGFAGLFEAAYHGLLNRKLGLTTMRDGDPALAGDLLKTMAENGADFTLTFRRLSAAAPGSGPAPEPEAVEAVRSLFIDPTSFDAWAERWRRRLDEEPGSAAGRKALMRSVNPAFIPRNHRVEAMIEAAVERQDFVPFETLLTVLSRPYDDQPDFAQFAEAPEGGGRGYRTFCGT.

ATP-binding residues include G88, G90, R91, K111, D123, G124, R174, and R181. Catalysis depends on D250, which acts as the Proton acceptor. Mg(2+) contacts are provided by N251 and D260. D260 lines the ATP pocket.

This sequence belongs to the SELO family. Mg(2+) serves as cofactor. It depends on Mn(2+) as a cofactor.

It carries out the reaction L-seryl-[protein] + ATP = 3-O-(5'-adenylyl)-L-seryl-[protein] + diphosphate. It catalyses the reaction L-threonyl-[protein] + ATP = 3-O-(5'-adenylyl)-L-threonyl-[protein] + diphosphate. The catalysed reaction is L-tyrosyl-[protein] + ATP = O-(5'-adenylyl)-L-tyrosyl-[protein] + diphosphate. The enzyme catalyses L-histidyl-[protein] + UTP = N(tele)-(5'-uridylyl)-L-histidyl-[protein] + diphosphate. It carries out the reaction L-seryl-[protein] + UTP = O-(5'-uridylyl)-L-seryl-[protein] + diphosphate. It catalyses the reaction L-tyrosyl-[protein] + UTP = O-(5'-uridylyl)-L-tyrosyl-[protein] + diphosphate. Functionally, nucleotidyltransferase involved in the post-translational modification of proteins. It can catalyze the addition of adenosine monophosphate (AMP) or uridine monophosphate (UMP) to a protein, resulting in modifications known as AMPylation and UMPylation. The sequence is that of Protein nucleotidyltransferase YdiU from Methylorubrum populi (strain ATCC BAA-705 / NCIMB 13946 / BJ001) (Methylobacterium populi).